Reading from the N-terminus, the 133-residue chain is Protein OPG104 (133 aa).

The Virion surface segment spans residues 1-111 (MTDEQIYAFC…RYLNQEIRYP (111 aa)). Residues 112 to 132 (IIDIKWLPIGLLALAILILAF) form a helical; Signal-anchor membrane-spanning segment.

The protein belongs to the orthopoxvirus OPG104 family. In terms of assembly, part of a stable entry-fusion complex (EFC) which is at least composed of proteins OPG143, OPG147, OPG155, OPG086, OPG094, OPG107, OPG104, and OPG099. Formation of the viral membrane is necessary for the assembly of the complex.

The protein localises to the virion membrane. Functionally, envelope protein part of the entry-fusion complex responsible for the virus membrane fusion with host cell membrane during virus entry. Also plays a role in cell-cell fusion (syncytium formation). This chain is Protein OPG104 (OPG104), found in Variola virus (isolate Human/India/Ind3/1967) (VARV).